The chain runs to 345 residues: Phosphoribosylformylglycinamidine cyclo-ligase (345 aa).

This sequence belongs to the AIR synthase family.

The protein localises to the cytoplasm. The enzyme catalyses 2-formamido-N(1)-(5-O-phospho-beta-D-ribosyl)acetamidine + ATP = 5-amino-1-(5-phospho-beta-D-ribosyl)imidazole + ADP + phosphate + H(+). It functions in the pathway purine metabolism; IMP biosynthesis via de novo pathway; 5-amino-1-(5-phospho-D-ribosyl)imidazole from N(2)-formyl-N(1)-(5-phospho-D-ribosyl)glycinamide: step 2/2. The polypeptide is Phosphoribosylformylglycinamidine cyclo-ligase (Prochlorococcus marinus (strain MIT 9211)).